The primary structure comprises 910 residues: DNA mismatch repair protein MutS (910 aa).

Over residues 1 to 15 the composition is skewed to polar residues; the sequence is MPRSAAQSEEQTLQG. Positions 1 to 94 are disordered; that stretch reads MPRSAAQSEE…EPAWAHHSQV (94 aa). A compositionally biased stretch (low complexity) spans 44 to 54; it reads DASLSADAAAR. 726-733 lines the ATP pocket; the sequence is GPNASGKS.

It belongs to the DNA mismatch repair MutS family.

Functionally, this protein is involved in the repair of mismatches in DNA. It is possible that it carries out the mismatch recognition step. This protein has a weak ATPase activity. In Synechococcus sp. (strain WH7803), this protein is DNA mismatch repair protein MutS.